A 347-amino-acid polypeptide reads, in one-letter code: F-box/kelch-repeat protein At5g03020 (347 aa).

The interval 1–21 is disordered; it reads MTEEMSKESPPPPPTSFSSLP. The 49-residue stretch at 14-62 folds into the F-box domain; that stretch reads PTSFSSLPDDVALDCRARISRFHYPTLSLVSKGFRTLIASPELEATRSF. 2 Kelch repeats span residues 119–165 and 167–215; these read QIYI…VIDG and IYVI…KKKH.

This chain is F-box/kelch-repeat protein At5g03020, found in Arabidopsis thaliana (Mouse-ear cress).